The following is a 76-amino-acid chain: Small proline-rich protein 2G (76 aa).

3 repeat units span residues 21–29, 30–38, and 39–47. Residues 21–47 form a 3 X 9 AA approximate tandem repeats region; sequence PKCPEPCPLPKCPEPCPPPKCPEPCPE. The tract at residues 55-76 is disordered; it reads QQKCPPVQTPPPCQQKCPPKSK.

The protein belongs to the cornifin (SPRR) family. As to expression, expressed in uterus.

The protein resides in the cytoplasm. Functionally, cross-linked envelope protein of keratinocytes. It is a keratinocyte protein that first appears in the cell cytosol, but ultimately becomes cross-linked to membrane proteins by transglutaminase. All that results in the formation of an insoluble envelope beneath the plasma membrane. The protein is Small proline-rich protein 2G (Sprr2g) of Mus musculus (Mouse).